The primary structure comprises 59 residues: Large ribosomal subunit protein uL30 (59 aa).

Belongs to the universal ribosomal protein uL30 family. Part of the 50S ribosomal subunit.

In Clostridium botulinum (strain Alaska E43 / Type E3), this protein is Large ribosomal subunit protein uL30.